The sequence spans 338 residues: Glycerol-3-phosphate dehydrogenase [NAD(P)+] (338 aa).

NADPH-binding residues include Ser-18, Tyr-19, His-39, and Lys-113. Sn-glycerol 3-phosphate contacts are provided by Lys-113, Gly-142, and Thr-144. Ala-146 provides a ligand contact to NADPH. 5 residues coordinate sn-glycerol 3-phosphate: Lys-198, Asp-251, Ser-261, Arg-262, and Asn-263. The active-site Proton acceptor is Lys-198. An NADPH-binding site is contributed by Arg-262. NADPH contacts are provided by Val-286 and Glu-288.

It belongs to the NAD-dependent glycerol-3-phosphate dehydrogenase family.

It is found in the cytoplasm. The enzyme catalyses sn-glycerol 3-phosphate + NAD(+) = dihydroxyacetone phosphate + NADH + H(+). It catalyses the reaction sn-glycerol 3-phosphate + NADP(+) = dihydroxyacetone phosphate + NADPH + H(+). Its pathway is membrane lipid metabolism; glycerophospholipid metabolism. Catalyzes the reduction of the glycolytic intermediate dihydroxyacetone phosphate (DHAP) to sn-glycerol 3-phosphate (G3P), the key precursor for phospholipid synthesis. This is Glycerol-3-phosphate dehydrogenase [NAD(P)+] from Photobacterium profundum (strain SS9).